The sequence spans 442 residues: Mannosylglycerate hydrolase (442 aa).

Residues tyrosine 38, tryptophan 42–aspartate 45, tyrosine 90, glutamine 116, and glycine 176 contribute to the substrate site. The Proton donor role is filled by aspartate 178. Substrate-binding positions include arginine 213 and tyrosine 369–tryptophan 370. Glutamate 413 acts as the Proton acceptor in catalysis.

Belongs to the glycosyl hydrolase 63 family. As to quaternary structure, homodimer in solution.

It catalyses the reaction (2R)-2-O-(alpha-D-mannosyl)-glycerate + H2O = D-mannose + (R)-glycerate. The catalysed reaction is (2R)-2-O-(alpha-D-glucopyranosyl)-glycerate + H2O = (R)-glycerate + D-glucose. With respect to regulation, activity is not stimulated by divalent cations and not affected in the presence of EDTA. Functionally, hydrolase that catalyzes the hydrolysis of mannosylglycerate (MG), a solute produced in response to osmotic stress in thermophiles, into mannose and glycerate. Can also hydrolyze glucosylglycerate (GG) to glucose and glycerate, with similar catalytic efficiency. Is highly specific for MG and GG, and cannot use mannosylglyceramide (MGA), glucosylglycerol, mannosylglucosylglycerate (MGG), glucosylglucosylglycerate (GGG) or trehalose as substrates. The polypeptide is Mannosylglycerate hydrolase (Rubrobacter radiotolerans (Arthrobacter radiotolerans)).